Here is a 378-residue protein sequence, read N- to C-terminus: Homoserine O-acetyltransferase (378 aa).

The 302-residue stretch at 54-355 (NAILVCHALS…NNPAGHDSFL (302 aa)) folds into the AB hydrolase-1 domain. The active-site Nucleophile is Ser159. Residue Arg228 coordinates substrate. Catalysis depends on residues Asp318 and His351. Asp352 is a binding site for substrate.

Belongs to the AB hydrolase superfamily. MetX family. In terms of assembly, homodimer.

The protein localises to the cytoplasm. The enzyme catalyses L-homoserine + acetyl-CoA = O-acetyl-L-homoserine + CoA. It functions in the pathway amino-acid biosynthesis; L-methionine biosynthesis via de novo pathway; O-acetyl-L-homoserine from L-homoserine: step 1/1. Functionally, transfers an acetyl group from acetyl-CoA to L-homoserine, forming acetyl-L-homoserine. The sequence is that of Homoserine O-acetyltransferase from Leptospira biflexa serovar Patoc (strain Patoc 1 / Ames).